A 147-amino-acid chain; its full sequence is Hemoglobin subunit gamma-1 (147 aa).

N-acetylglycine; in form Hb F1 is present on glycine 2. Residues 3–147 enclose the Globin domain; that stretch reads HFTEEDKATI…VASALSSRYH (145 aa). Phosphothreonine is present on threonine 13. A phosphoserine mark is found at serine 45, serine 51, and serine 53. Lysine 60 is modified (N6-acetyllysine). Position 64 (histidine 64) interacts with heme b. Residue lysine 83 is modified to N6-acetyllysine. Residue histidine 93 coordinates heme b. Cysteine 94 carries the S-nitrosocysteine modification. Phosphoserine is present on serine 140.

It belongs to the globin family. As to quaternary structure, heterotetramer of two alpha chains and two gamma chains in fetal hemoglobin (Hb F). In the case of deletions affecting one or more of the alpha chains, the excess gamma chains form homotetramers that exhibit neither Bohr effect nor heme-heme cooperativity (hemoglobin Bart's). Post-translationally, acetylation of Gly-2 converts Hb F to the minor Hb F1. In terms of tissue distribution, red blood cells.

Functionally, gamma chains make up the fetal hemoglobin F, in combination with alpha chains. In Homo sapiens (Human), this protein is Hemoglobin subunit gamma-1 (HBG1).